A 421-amino-acid polypeptide reads, in one-letter code: Tyrosine--tRNA ligase (421 aa).

Residue Tyr35 coordinates L-tyrosine. Residues 40–49 carry the 'HIGH' region motif; it reads PTADSLHIGH. The L-tyrosine site is built by Tyr170 and Gln174. Residues 232-236 carry the 'KMSKS' region motif; that stretch reads KFGKT. Lys235 is an ATP binding site. Residues 355–421 form the S4 RNA-binding domain; that stretch reads LSLVDVLVES…GKKKYFLITY (67 aa).

The protein belongs to the class-I aminoacyl-tRNA synthetase family. TyrS type 1 subfamily. Homodimer.

The protein resides in the cytoplasm. It catalyses the reaction tRNA(Tyr) + L-tyrosine + ATP = L-tyrosyl-tRNA(Tyr) + AMP + diphosphate + H(+). In terms of biological role, catalyzes the attachment of tyrosine to tRNA(Tyr) in a two-step reaction: tyrosine is first activated by ATP to form Tyr-AMP and then transferred to the acceptor end of tRNA(Tyr). This is Tyrosine--tRNA ligase from Bacillus velezensis (strain DSM 23117 / BGSC 10A6 / LMG 26770 / FZB42) (Bacillus amyloliquefaciens subsp. plantarum).